The primary structure comprises 374 residues: uncharacterized protein (374 aa).

Residues 1-13 (METKYHEYDDVQT) are compositionally biased toward basic and acidic residues. 3 disordered regions span residues 1 to 20 (METK…PSNK), 91 to 193 (SPMT…PLNQ), and 236 to 374 (KINN…SDFE). Positions 95-155 (NNNNNNNNNN…NNSSNNNNNN (61 aa)) are enriched in low complexity. Residues 166–193 (ISSNQSSPLSIYSTPPNPSSYVSSPLNQ) show a composition bias toward polar residues. Residues 242 to 262 (APPPPPKACAPPPPPPPPPPI) are compositionally biased toward pro residues. Residues 277–300 (NNNNNNNNNNNSSNTNDSNNTNNT) are compositionally biased toward low complexity.

This is an uncharacterized protein from Dictyostelium discoideum (Social amoeba).